The following is a 218-amino-acid chain: MTEPLILQPAKPADACVIWLHGLGADRYDFMPVAEALQESLLTTRFVLPQAPTRPVTINGGYEMPSWYDIKAMSPARSISLEELEVSAKMVTDLIEAQKRTGIDASRIFLAGFSQGGAVVFHTAFINWQGPLGGVIALSTYAPTFGDELELSASQQRIPALCLHGQYDDVVQNAMGRSAFEHLKSRGVTVTWQEYPMGHEVLPQEIHDIGAWLAARLG.

Residues Ser-114, Asp-168, and His-199 each act as charge relay system in the active site.

Belongs to the AB hydrolase superfamily. AB hydrolase 2 family. In terms of assembly, homodimer.

The catalysed reaction is a carboxylic ester + H2O = an alcohol + a carboxylate + H(+). In terms of biological role, hydrolyzes carboxylic ester bonds with relatively broad substrate specificity. This is Carboxylesterase 2 (estB) from Pseudomonas fluorescens.